We begin with the raw amino-acid sequence, 2282 residues long: MVPLSGEQLAQFYRVDGEMALAEAFEKEFLTRELQENDQCMNHPLYQLLQRYAKARAEFSLNVLEFEALRRKCKALANELWTVREQTFAGTGTCGDGKVVHASHISSVAALQESALADFSSNLQDLMKQSFFQCSQSTYEVDATRIKIEQKIYETLNLHPVLSNLPADSPVVLNPPIDAMQLTAAIGELRLCISILFAFLRKGITDKRFLADVRGWTVKLVATQLRIATVHDHLFVLFHVLRSPSGIANWATSLVQLPTEQDLRWGSSEFQHILVVMACILLPIKKRNEFLEKLKLDMNRSIDVVQEEMWAIVDSDGEDCSGSDSISELKEGDLVALIDQIPFGMVFRALTLVDRKLDGTWRLGEDQVRGTHVMKAIAFGTIFVELLGNGLMTYNADRYRQFAKRVARLIKHTVYYVSDLYRILLERTRSVQVVLDDYETTRINLELDVFVVRAAQYIYRSRKIGTWQYLSGFPFDQLSVGALWKLYYFLHLDEFNEELITAVGTDFRDLCIGPNQREKFRNGLVGMPSEDLYYLLQVFSNMALAREIDDFEFIETVALNLFDIGYLNEYTKDFCYKAVKDLLFNIVYKHPSLVSSLLQYMKQDVAQADHSALYVFKSLPLDRWRPQWDDFELLANWILNYGFDAVQSSTARVILIHLNYNFDSNNELFLPHDIHVRIACLITEIYSKHVPELLGNPQGLVASVSSLVKNKTAQDQFLAWCWNMVSLLRLHCMDQSPTVINGMMKNPALILRYVLELERAQQIYQGVTENRPLAIYLAILISTWGHSVPQICHQGFEQIRLLLNDHRYVVVVRCLQLITPLFLECPDSLSHCESFKSILISLMAADKYYARFTKDQFKPESNSPCLTELPNWTKDPAIIGLLDAMAGVAYQFPDAWHSMKEFFRPYFSVSSIILHSPSSATVFLSIFTLELEYELTEIQSGIWHEVIRGIGLPSSPKLTIETAIKKSTSILGYPSFPPSSLAVFKLANLVANCTIKNFMYPIVCQLFFTIYLSRLPLSTEEQRFANCFGVSDQIYECNVGLMKRIKKQLYDAECFYNSASVSESDERQRSFYNHCTRLFKTFQLWLEDTQLNKISTNAVNLPPQFDRYRLAAIFRGNRDHWTDFIDFRGIRSDHRDLADAWQKLCYRYKPEVSTVATNSPARSLASSHSVTDLQDFKQSIFKRLETYDAPAPAPLVFKPTPLIPPAKFTTQSSNSFLVMYNEHLLLDSFYLEQVPKLYIVEDKVLYKDASCSNGCTESRKVLVRYKVSKLDKNLSAVLRENRSAHEALLQRESKLPDRIVMASVRIDAFLRQIVEAYREFKLSGETNVCAKLNKVGSTLFYEFVGKMNDYNQLCPLTKDVCSLGISQLGFFMRENQNDEGIKLLNITLGRPEMISLLSELLVPASCPPQFFLRMYEFVIDSHIKRHDTQVLFVMLSKFDIIAWMNRYRPKLVDVRRLVELILRGLEGWTQKNAVLIQDLLQRHLMHLFEFDFPEYYGDILQMVLAACSLKKIMAQVLLELLNSMRRRVECQPLTFGLGLVSIKEDFRSFATKQKILSYKDLIDTTVLLTQHFQQERLNHGLHGLYPVHSDYCEVLSLLLGSVGHATVVAAVHAYPGVLADELINWLWPPLCDMFSPWLTPYFPQNMKGQQQVANWIQQVASDSSILPPWSELHSETAFRMVKVFEHCIQYLMDTFPSSSALLGHLFSWYELNFAHPALPRHVAVPIHTNLMNLAWDRFRPAPVHITGFSRILQQFIPEAHKFVGHIFIRIAWTPWLQQNIQSWDYQLRYQMLSALLMIFIKISYEPNAREGLKIVTLLQEACNYPWHMLEYQGVEAVLDWFVLSAEPSVVLKMPSESEVVDSAVLDLLQVASSMKFNSGNPLESTALQSQVQAKRILYVRTTVRLLNSCGAKYQKLLGTKQGVQAFHNAVLGLFNIVETVLLQIRSTKDREFEARNLIGEVIVSLQSQGEYTSKLFTEAIVLWTENCRTSDSYIVPSVLDAVGMCKSFSLNLYLLLEEMLFHYFGKSWHGQVNDGGDPVLDASWVKALHKVGLQTVKGFDEEMLVKHRCLLVLHLLTVQKLRTAGSSGERIVVLQKLFQLLENVKVSDQTESKLILLWSLMAVVGVEIMKASSNGQNHLLTLARYLQTCSKDAEGWGEGLLGAIGIRKDGISIRRKVVAKCLSCIVFLLFGEDSGEALEASESGPPSIDCANRCKEYDQAMGDLKQTLTNKRYGDMHIKTRAAINLVENTAMIANIGENVCKIVRLFCDEHFFHSVEEVWRC.

Belongs to the EPG5 family.

Functionally, involved in autophagy. The polypeptide is Ectopic P granules protein 5 homolog (Aedes aegypti (Yellowfever mosquito)).